Here is a 346-residue protein sequence, read N- to C-terminus: Selenide, water dikinase (346 aa).

The active site involves Cys15. Residues Lys18 and 46-48 (SKD) each bind ATP. Residue Asp49 participates in Mg(2+) binding. ATP-binding positions include Asp66, Asp89, and 137–139 (GHS). Asp89 serves as a coordination point for Mg(2+). Asp225 provides a ligand contact to Mg(2+).

Belongs to the selenophosphate synthase 1 family. Class I subfamily. Homodimer. Requires Mg(2+) as cofactor.

The catalysed reaction is hydrogenselenide + ATP + H2O = selenophosphate + AMP + phosphate + 2 H(+). Synthesizes selenophosphate from selenide and ATP. In Photobacterium profundum (strain SS9), this protein is Selenide, water dikinase.